A 543-amino-acid polypeptide reads, in one-letter code: MAAKQVLFSDEARAKMLDGVNTLANAVKVTLGPKGRNVVLDKAYGAPTITKDGVSVAKEIELEDKFENMGAQIVKEVASKTADVAGDGTTTATVLAQALLTEGLKAVAAGMNPMDLKRGIDKAAAKLVEELKVLSKPCSDTKSIEQVGTISANSDSTVGKLIAEAMAKVGKEGVITVEEGKGFEDELDVVEGMQFDRGYLSPYFATNQENMTTDLESPYILLVDKKISNIRELLPVLEGVSKSGKALLIIAEDVESEALATLVVNNMRGVVKVCAVKAPGFGDRRKAMLEDIAILTGATVISEDLGMKLEEANMEHLGTASRVQVSKDDTTIIDGAGNKDAIVNRVNQLKANVAEATSDYDKEKLQERLAKLSGGVAVIRVGAVTEAEMKEKKDRVDDALHATRAAVEEGIVAGGGVALIRAQKALDGLVGDNDDQNHGIALLKKAIEAPLRQIVSNAGGESSVVVNEVKAKEGNYGYNAANDTYGDMVEMGILDPTKVTRSALQHAASIAGLMITTEAMVAEIKEDAPAMPMGGMGGMPGMM.

ATP-binding positions include 30-33 (TLGP), lysine 51, 87-91 (DGTTT), glycine 415, 479-481 (NAA), and aspartate 495.

The protein belongs to the chaperonin (HSP60) family. Forms a cylinder of 14 subunits composed of two heptameric rings stacked back-to-back. Interacts with the co-chaperonin GroES.

It is found in the cytoplasm. The catalysed reaction is ATP + H2O + a folded polypeptide = ADP + phosphate + an unfolded polypeptide.. Its function is as follows. Together with its co-chaperonin GroES, plays an essential role in assisting protein folding. The GroEL-GroES system forms a nano-cage that allows encapsulation of the non-native substrate proteins and provides a physical environment optimized to promote and accelerate protein folding. In Francisella philomiragia subsp. philomiragia (strain ATCC 25017 / CCUG 19701 / FSC 153 / O#319-036), this protein is Chaperonin GroEL.